Here is a 93-residue protein sequence, read N- to C-terminus: Small ribosomal subunit protein uS19 (93 aa).

This sequence belongs to the universal ribosomal protein uS19 family.

Protein S19 forms a complex with S13 that binds strongly to the 16S ribosomal RNA. This Syntrophus aciditrophicus (strain SB) protein is Small ribosomal subunit protein uS19.